Here is a 175-residue protein sequence, read N- to C-terminus: Protein CENTRORADIALIS-like (175 aa).

It belongs to the phosphatidylethanolamine-binding protein family. Expressed in tissues surrounding vascular bundles in hypocotyl of 2-week-old plants.

The protein resides in the cytoplasm. In terms of biological role, may form complexes with phosphorylated ligands by interfering with kinases and their effectors. Can substitute for TERMINAL FLOWER 1 (in vitro). The chain is Protein CENTRORADIALIS-like (CEN) from Arabidopsis thaliana (Mouse-ear cress).